The chain runs to 146 residues: Large ribosomal subunit protein uL15 (146 aa).

The segment at Met-1–Arg-42 is disordered.

This sequence belongs to the universal ribosomal protein uL15 family. Part of the 50S ribosomal subunit.

Its function is as follows. Binds to the 23S rRNA. The protein is Large ribosomal subunit protein uL15 of Mycobacterium leprae (strain Br4923).